We begin with the raw amino-acid sequence, 361 residues long: UDP-N-acetylglucosamine--N-acetylmuramyl-(pentapeptide) pyrophosphoryl-undecaprenol N-acetylglucosamine transferase (361 aa).

UDP-N-acetyl-alpha-D-glucosamine-binding positions include 21–23, asparagine 131, arginine 172, serine 195, isoleucine 250, and glutamine 295; that span reads TGG.

The protein belongs to the glycosyltransferase 28 family. MurG subfamily.

The protein resides in the cell inner membrane. The enzyme catalyses di-trans,octa-cis-undecaprenyl diphospho-N-acetyl-alpha-D-muramoyl-L-alanyl-D-glutamyl-meso-2,6-diaminopimeloyl-D-alanyl-D-alanine + UDP-N-acetyl-alpha-D-glucosamine = di-trans,octa-cis-undecaprenyl diphospho-[N-acetyl-alpha-D-glucosaminyl-(1-&gt;4)]-N-acetyl-alpha-D-muramoyl-L-alanyl-D-glutamyl-meso-2,6-diaminopimeloyl-D-alanyl-D-alanine + UDP + H(+). It participates in cell wall biogenesis; peptidoglycan biosynthesis. Cell wall formation. Catalyzes the transfer of a GlcNAc subunit on undecaprenyl-pyrophosphoryl-MurNAc-pentapeptide (lipid intermediate I) to form undecaprenyl-pyrophosphoryl-MurNAc-(pentapeptide)GlcNAc (lipid intermediate II). This Solibacter usitatus (strain Ellin6076) protein is UDP-N-acetylglucosamine--N-acetylmuramyl-(pentapeptide) pyrophosphoryl-undecaprenol N-acetylglucosamine transferase.